The primary structure comprises 636 residues: Probable Xaa-Pro aminopeptidase P (636 aa).

Asp414, Asp425, Glu523, and Glu537 together coordinate Mn(2+).

The protein belongs to the peptidase M24B family. Mn(2+) is required as a cofactor.

It carries out the reaction Release of any N-terminal amino acid, including proline, that is linked to proline, even from a dipeptide or tripeptide.. In terms of biological role, catalyzes the removal of a penultimate prolyl residue from the N-termini of peptides. This chain is Probable Xaa-Pro aminopeptidase P (AMPP), found in Ajellomyces capsulatus (strain H143) (Darling's disease fungus).